The chain runs to 467 residues: Asparagine--tRNA ligase (467 aa).

The protein belongs to the class-II aminoacyl-tRNA synthetase family. In terms of assembly, homodimer.

It is found in the cytoplasm. It carries out the reaction tRNA(Asn) + L-asparagine + ATP = L-asparaginyl-tRNA(Asn) + AMP + diphosphate + H(+). This chain is Asparagine--tRNA ligase, found in Legionella pneumophila (strain Paris).